Consider the following 262-residue polypeptide: Small ribosomal subunit protein uS3 (262 aa).

Residues 39–107 enclose the KH type-2 domain; it reads VREFLKKKLK…PVHVNIEEIR (69 aa). The disordered stretch occupies residues 211 to 262; that stretch reads NDAPVVEEPQEERRKRPGRPEGRRREGEGRPAGQRRGAGAGARRGTDAKTGE. Residues 221-239 show a composition bias toward basic and acidic residues; the sequence is EERRKRPGRPEGRRREGEG.

This sequence belongs to the universal ribosomal protein uS3 family. Part of the 30S ribosomal subunit. Forms a tight complex with proteins S10 and S14.

Binds the lower part of the 30S subunit head. Binds mRNA in the 70S ribosome, positioning it for translation. This Ralstonia pickettii (strain 12J) protein is Small ribosomal subunit protein uS3.